A 322-amino-acid chain; its full sequence is DNA repair and recombination protein RadA (322 aa).

105–112 (GMFGSGKT) serves as a coordination point for ATP.

This sequence belongs to the eukaryotic RecA-like protein family.

Its function is as follows. Involved in DNA repair and in homologous recombination. Binds and assemble on single-stranded DNA to form a nucleoprotein filament. Hydrolyzes ATP in a ssDNA-dependent manner and promotes DNA strand exchange between homologous DNA molecules. In Methanococcus maripaludis (Methanococcus deltae), this protein is DNA repair and recombination protein RadA.